The following is a 512-amino-acid chain: MNGQGCELGHSNGDIISQNQQKGWWTIGLINGQHKYMTAETFGFKLNANGASLKKKQLWTLEPSNTGESIIYLRSHLNKYLSVDQFGNVLCESDERDAGSRFQISISEDGSGRWALKNESRGYFLGGTPDKLVCTAKTPGASEFWTVHLAARPQVNLRSIGRKRFAHLSESQDEIHVDANIPWGEDTLFTLEFRAEEGGRYALHTCNNKYLNANGKLQVVCNEDCLFSAEYHGGHLALRDRQGQYLSPIGSKAVLKSRSSSVTRDELFSLEDSLPQASFIAGLNLRYVSVKQGVDVTANQDEVGENETFQLEYDWSAHRWALRTTQDRYWCLSAGGGIQATGNRRCADALFELIWHGDGSLSFRANNGKFLATKRSGHLFATSESIEEIAKFYFYLINRPILVLKCEQGFVGYRTPGNLKLECNKATYETILVERAQKGLVHLKAHSGKYWRIEGESISVDADAPSDGFFLELREPTRICIRSQQGKYLGATKNGAFKLLDDGTDSATQWEF.

Belongs to the fascin family. Interacts with Rab35, with stronger binding to the Rab35-GTP form compared to the Rab35-GDP form.

Its subcellular location is the cytoplasm. It localises to the cytoskeleton. Acts as an actin bundling protein. May have a role in the asymmetric organization and/or movement of cytoplasmic components. It has a role in somatic cells during the formation of adult bristles and hairs, and in the female germline during oogenesis. This Drosophila melanogaster (Fruit fly) protein is Protein singed (sn).